Here is a 509-residue protein sequence, read N- to C-terminus: Diacylglycerol kinase 5 (509 aa).

One can recognise a DAGKc domain in the interval 36–187; sequence TPASPVLVFI…IDNWHILMRM (152 aa). Basic and acidic residues predominate over residues 439–452; the sequence is RSVFDPSTPRHQDG. The tract at residues 439-509 is disordered; that stretch reads RSVFDPSTPR…SNVHGWSHVL (71 aa). The segment covering 453 to 467 has biased composition (acidic residues); the sequence is AEDYDDNEDDSVAEG. Basic and acidic residues predominate over residues 468–489; the sequence is EEFRKFGAADTFKIPDEGEHSN. Residues 490–500 show a composition bias toward basic residues; that stretch reads KKGRASRRRNS.

It belongs to the eukaryotic diacylglycerol kinase family. Monomer.

The catalysed reaction is a 1,2-diacyl-sn-glycerol + ATP = a 1,2-diacyl-sn-glycero-3-phosphate + ADP + H(+). In terms of biological role, phosphorylates the second messenger diacylglycerol (DAG) to generate phosphatidic acid (PA), another important signaling molecule. PA is required for plant development and responses to abiotic stress and pathogen attack. May be involved in the accumulation of PA during cold stress. This Arabidopsis thaliana (Mouse-ear cress) protein is Diacylglycerol kinase 5 (DGK5).